Reading from the N-terminus, the 2587-residue chain is Clavatol synthase claF (2587 aa).

An N-terminal acylcarrier protein transacylase domain (SAT) region spans residues 93 to 256 (LLSPLVVIVQ…TEVALSGRFH (164 aa)). The active-site Nucleophile; for transacylase activity is the Cys-137. His-256 acts as the Proton donor/acceptor; for transacylase activity in catalysis. The 417-residue stretch at 383–799 (DDQIAVIGMA…GSNASMIITQ (417 aa)) folds into the Ketosynthase family 3 (KS3) domain. Residues Cys-548, His-683, and His-722 each act as for beta-ketoacyl synthase activity in the active site. A malonyl-CoA:ACP transacylase (MAT) domain region spans residues 912-1222 (CFGGQISTYV…ESLPLLAEAT (311 aa)). The segment at 1284 to 1416 (PKGLTTFIGF…GSIVFLPASD (133 aa)) is N-terminal hotdog fold. Residues 1284-1595 (PKGLTTFIGF…YRLVPMDSMR (312 aa)) enclose the PKS/mFAS DH domain. The tract at residues 1315 to 1593 (LTSANVALNT…ISYRLVPMDS (279 aa)) is product template (PT) domain. The tract at residues 1436 to 1595 (ASLLQGNGAD…YRLVPMDSMR (160 aa)) is C-terminal hotdog fold. The disordered stretch occupies residues 1609–1635 (STAAVSSKSTPVHAPTPTTTVSSTPSS). Low complexity predominate over residues 1617–1635 (STPVHAPTPTTTVSSTPSS). In terms of domain architecture, Carrier spans 1654–1728 (PDISAKMCEI…SLVSCIRSTL (75 aa)). O-(pantetheine 4'-phosphoryl)serine is present on Ser-1688. Active-site for methyltransferase activity residues include Tyr-1947, His-2059, and Glu-2085. Residues 1952–2126 (VNTVWIKQLE…ATYWEKVLQS (175 aa)) form a methyltransferase (CMeT) domain region. The interval 2208–2452 (SLSSGQCVLV…KILPELDGTL (245 aa)) is NADPH-binding (R) domain.

Requires pantetheine 4'-phosphate as cofactor.

It catalyses the reaction 3 malonyl-CoA + acetyl-CoA + AH2 + 2 S-adenosyl-L-methionine + H(+) = clavatol + A + 2 S-adenosyl-L-homocysteine + 3 CO2 + 4 CoA + H2O. It functions in the pathway secondary metabolite biosynthesis. In terms of biological role, non-reducing polyketide synthase; part of the cla gene cluster that produces clavatol and ortho-quinone methide. The clavatol biosynthesis cluster cla and the terrestric acid cluster tra are both involved in the production of peniphenones and penilactones. The non-reducing PKS claF is responsible for the formation of clavatol from successive condensations of 3 malonyl-CoA units, presumably with a simple acetyl-CoA starter unit, and 2 methylation steps. The esterase claE probably collaborates with claF by catalyzing the hydrolysis of ACP-bound acyl intermediates to free the ACP from stalled intermediates. The clavatol oxidase claD then converts clavatol to hydroxyclavatol. Spontaneous dehydration of hydroxyclavatol leads to the accumulation of the highly active ortho-quinone methide. On the other hand, the PKS-NRPS hybrid traA is involved in the formation of crustosic acid, with the help of traB and traD. The polyketide synthase module (PKS) of traA is responsible for the synthesis of the polyketide backbone via the condensation of an acetyl-CoA starter unit with 3 malonyl-CoA units. The downstream nonribosomal peptide synthetase (NRPS) module then amidates the carboxyl end of the polyketide with L-malic acid. Because traA lacks a designated enoylreductase (ER) domain, the required activity is provided the enoyl reductase traG. Crustosic acid undergoes decarboxylation and isomerization to the terrestric acid, catalyzed by the 2-oxoglutarate-dependent dioxygenase traH. Both acids are further converted to the 2 gamma-butyrolactones (R)-5-methyltetronic acid and (S)-5-carboxylmethyltetronic acid, with involvement of the cytochrome P450 monooxygenase claJ. Spontaneous addition of the methide to these gamma-butyrolactones leads to peniphenone D and penilactone D, which undergo again stereospecific attacking by methide to give penilactones A and B. This Penicillium crustosum (Blue mold fungus) protein is Clavatol synthase claF.